The sequence spans 422 residues: Histidine--tRNA ligase (422 aa).

It belongs to the class-II aminoacyl-tRNA synthetase family. In terms of assembly, homodimer.

The protein localises to the cytoplasm. The catalysed reaction is tRNA(His) + L-histidine + ATP = L-histidyl-tRNA(His) + AMP + diphosphate + H(+). The polypeptide is Histidine--tRNA ligase (Vibrio campbellii (strain ATCC BAA-1116)).